We begin with the raw amino-acid sequence, 738 residues long: LPS-assembly protein LptD (738 aa).

Residues 1–26 (MEHKRNNILLAGLFFLLLGLVSIARA) form the signal peptide.

The protein belongs to the LptD family. In terms of assembly, component of the lipopolysaccharide transport and assembly complex. Interacts with LptE and LptA.

The protein localises to the cell outer membrane. In terms of biological role, together with LptE, is involved in the assembly of lipopolysaccharide (LPS) at the surface of the outer membrane. In Nitrosococcus oceani (strain ATCC 19707 / BCRC 17464 / JCM 30415 / NCIMB 11848 / C-107), this protein is LPS-assembly protein LptD.